Here is a 257-residue protein sequence, read N- to C-terminus: 3-methyl-2-oxobutanoate hydroxymethyltransferase (257 aa).

Mg(2+) contacts are provided by D42 and D86. 3-methyl-2-oxobutanoate contacts are provided by residues D42–S43, D86, and K116. A Mg(2+)-binding site is contributed by E118. Catalysis depends on E185, which acts as the Proton acceptor.

It belongs to the PanB family. As to quaternary structure, homodecamer; pentamer of dimers. Requires Mg(2+) as cofactor.

It is found in the cytoplasm. The enzyme catalyses 3-methyl-2-oxobutanoate + (6R)-5,10-methylene-5,6,7,8-tetrahydrofolate + H2O = 2-dehydropantoate + (6S)-5,6,7,8-tetrahydrofolate. It functions in the pathway cofactor biosynthesis; (R)-pantothenate biosynthesis; (R)-pantoate from 3-methyl-2-oxobutanoate: step 1/2. In terms of biological role, catalyzes the reversible reaction in which hydroxymethyl group from 5,10-methylenetetrahydrofolate is transferred onto alpha-ketoisovalerate to form ketopantoate. This chain is 3-methyl-2-oxobutanoate hydroxymethyltransferase, found in Prochlorococcus marinus (strain MIT 9301).